A 429-amino-acid chain; its full sequence is Histidinol dehydrogenase (429 aa).

Residues Tyr130, Gln191, and Asn214 each coordinate NAD(+). Positions 237, 259, and 262 each coordinate substrate. Residues Gln259 and His262 each coordinate Zn(2+). Catalysis depends on proton acceptor residues Glu327 and His328. His328, Asp361, Glu415, and His420 together coordinate substrate. A Zn(2+)-binding site is contributed by Asp361. His420 is a Zn(2+) binding site.

The protein belongs to the histidinol dehydrogenase family. The cofactor is Zn(2+).

The enzyme catalyses L-histidinol + 2 NAD(+) + H2O = L-histidine + 2 NADH + 3 H(+). It participates in amino-acid biosynthesis; L-histidine biosynthesis; L-histidine from 5-phospho-alpha-D-ribose 1-diphosphate: step 9/9. Functionally, catalyzes the sequential NAD-dependent oxidations of L-histidinol to L-histidinaldehyde and then to L-histidine. This chain is Histidinol dehydrogenase, found in Neisseria meningitidis serogroup A / serotype 4A (strain DSM 15465 / Z2491).